The primary structure comprises 290 residues: Endoplasmic reticulum-Golgi intermediate compartment protein 1 (290 aa).

The Cytoplasmic portion of the chain corresponds to 1–27; the sequence is MSFDVRRFDIYRKVPKDLTQPTYTGAF. The helical transmembrane segment at 28–48 threads the bilayer; sequence ISICCCVFMLFLFLSELTGFI. Over 49–254 the chain is Lumenal; sequence ATEIVNELYV…RRRPFYRFIT (206 aa). A glycan (N-linked (GlcNAc...) asparagine) is linked at N74. A helical membrane pass occupies residues 255-275; sequence TICAIIGGTFTVAGIIDSCIF. Residues 276-290 lie on the Cytoplasmic side of the membrane; the sequence is TASEAWKKIQIGKMS.

The protein belongs to the ERGIC family.

It is found in the endoplasmic reticulum membrane. The protein resides in the endoplasmic reticulum-Golgi intermediate compartment membrane. It localises to the golgi apparatus membrane. Functionally, possible role in transport between endoplasmic reticulum and Golgi. The protein is Endoplasmic reticulum-Golgi intermediate compartment protein 1 (ergic1) of Danio rerio (Zebrafish).